The sequence spans 451 residues: Rab GDP-dissociation inhibitor (451 aa).

Interaction with YPT1 regions lie at residues 106–112 (RYVDFKQ) and 234–259 (YPMY…TYML).

It belongs to the Rab GDI family. As to quaternary structure, interacts with the GDP-bound form of Rab GTPase YPT1. Interacts with YPT10.

The protein localises to the cytoplasm. Regulates the GDP/GTP exchange reaction of SEC4 by inhibiting the dissociation of GDP from it, and the subsequent binding of GTP to SEC4. Plays an essential role in the yeast secretory pathway. Extracts GDP-bound YPT7 from vacuolar membranes, antagonizing vacuolar membrane fusion. The polypeptide is Rab GDP-dissociation inhibitor (GDI1) (Saccharomyces cerevisiae (strain ATCC 204508 / S288c) (Baker's yeast)).